The primary structure comprises 289 residues: Diaminopimelate epimerase (289 aa).

Positions 13, 47, and 67 each coordinate substrate. Cysteine 76 functions as the Proton donor in the catalytic mechanism. Substrate contacts are provided by residues 77-78, asparagine 167, asparagine 200, and 218-219; these read GN and ER. Residue cysteine 227 is the Proton acceptor of the active site. A substrate-binding site is contributed by 228 to 229; it reads GT.

Belongs to the diaminopimelate epimerase family. In terms of assembly, homodimer.

The protein localises to the cytoplasm. The enzyme catalyses (2S,6S)-2,6-diaminopimelate = meso-2,6-diaminopimelate. Its pathway is amino-acid biosynthesis; L-lysine biosynthesis via DAP pathway; DL-2,6-diaminopimelate from LL-2,6-diaminopimelate: step 1/1. In terms of biological role, catalyzes the stereoinversion of LL-2,6-diaminopimelate (L,L-DAP) to meso-diaminopimelate (meso-DAP), a precursor of L-lysine and an essential component of the bacterial peptidoglycan. This Burkholderia pseudomallei (strain 668) protein is Diaminopimelate epimerase.